The following is a 357-amino-acid chain: MPRLLIAASGTGGHIFPALSVAEELPESWDISWLGVPERLENQLVPTKYDMTVIPVGGLQSKGLRKYFQLLKLILAIFFVIYLIKRKQIKLVFTTGGYIAAPAIIASKLCGINVILHESNSYPGKVTRLLGKFCDEVALGLPIAAEKLKRCRTIVTGMPVRKSFSLKNPLPIWVPKGLEPLIVVMGGSQGAVGLNRMVRESLPWLLKQGYRVVHITGKYDKPSNINHKNFVEKSFTEEIPGLLQHADLAISRAGAGALSEFAICSLPVILVPYPYSSDHHQDANAAYAAQFGAALIVHEDRLGTHVLTRALENLLATNRMSSKYKSDDLLNKMRIGMTKLAIKDANQRLISILQRYV.

UDP-N-acetyl-alpha-D-glucosamine-binding positions include 11–13 (TGG), Asn-120, Arg-161, Ser-188, and Gln-281.

Belongs to the glycosyltransferase 28 family. MurG subfamily.

Its subcellular location is the cell inner membrane. It carries out the reaction di-trans,octa-cis-undecaprenyl diphospho-N-acetyl-alpha-D-muramoyl-L-alanyl-D-glutamyl-meso-2,6-diaminopimeloyl-D-alanyl-D-alanine + UDP-N-acetyl-alpha-D-glucosamine = di-trans,octa-cis-undecaprenyl diphospho-[N-acetyl-alpha-D-glucosaminyl-(1-&gt;4)]-N-acetyl-alpha-D-muramoyl-L-alanyl-D-glutamyl-meso-2,6-diaminopimeloyl-D-alanyl-D-alanine + UDP + H(+). Its pathway is cell wall biogenesis; peptidoglycan biosynthesis. Functionally, cell wall formation. Catalyzes the transfer of a GlcNAc subunit on undecaprenyl-pyrophosphoryl-MurNAc-pentapeptide (lipid intermediate I) to form undecaprenyl-pyrophosphoryl-MurNAc-(pentapeptide)GlcNAc (lipid intermediate II). This Prochlorococcus marinus (strain SARG / CCMP1375 / SS120) protein is UDP-N-acetylglucosamine--N-acetylmuramyl-(pentapeptide) pyrophosphoryl-undecaprenol N-acetylglucosamine transferase.